A 279-amino-acid polypeptide reads, in one-letter code: Octanoyl-[GcvH]:protein N-octanoyltransferase (279 aa).

Residues 48–253 (ETSPPVIRLW…TLEKLSDEIV (206 aa)) form the BPL/LPL catalytic domain. The active-site Acyl-thioester intermediate is the C152.

This sequence belongs to the octanoyltransferase LipL family.

The enzyme catalyses N(6)-octanoyl-L-lysyl-[glycine-cleavage complex H protein] + L-lysyl-[lipoyl-carrier protein] = N(6)-octanoyl-L-lysyl-[lipoyl-carrier protein] + L-lysyl-[glycine-cleavage complex H protein]. The protein operates within protein modification; protein lipoylation via endogenous pathway; protein N(6)-(lipoyl)lysine from octanoyl-[acyl-carrier-protein]. Its function is as follows. Catalyzes the amidotransfer (transamidation) of the octanoyl moiety from octanoyl-GcvH to the lipoyl domain of the E2 subunit of lipoate-dependent enzymes. The chain is Octanoyl-[GcvH]:protein N-octanoyltransferase from Oceanobacillus iheyensis (strain DSM 14371 / CIP 107618 / JCM 11309 / KCTC 3954 / HTE831).